Consider the following 113-residue polypeptide: Probable protein L3 (113 aa).

The polypeptide is Probable protein L3 (Bos taurus (Bovine)).